A 606-amino-acid polypeptide reads, in one-letter code: Isocitrate dehydrogenase kinase/phosphatase (606 aa).

ATP is bound by residues 354-360 (APGFKGT) and Lys375. Residue Asp414 is part of the active site.

It belongs to the AceK family.

Its subcellular location is the cytoplasm. It catalyses the reaction L-seryl-[isocitrate dehydrogenase] + ATP = O-phospho-L-seryl-[isocitrate dehydrogenase] + ADP + H(+). In terms of biological role, bifunctional enzyme which can phosphorylate or dephosphorylate isocitrate dehydrogenase (IDH) on a specific serine residue. This is a regulatory mechanism which enables bacteria to bypass the Krebs cycle via the glyoxylate shunt in response to the source of carbon. When bacteria are grown on glucose, IDH is fully active and unphosphorylated, but when grown on acetate or ethanol, the activity of IDH declines drastically concomitant with its phosphorylation. The chain is Isocitrate dehydrogenase kinase/phosphatase from Rhodopseudomonas palustris (strain BisB5).